A 296-amino-acid polypeptide reads, in one-letter code: Ribosomal RNA small subunit methyltransferase H (296 aa).

S-adenosyl-L-methionine-binding positions include 30–32 (GGH), Asp49, Phe76, Asp97, and Gln104.

The protein belongs to the methyltransferase superfamily. RsmH family.

The protein resides in the cytoplasm. It carries out the reaction cytidine(1402) in 16S rRNA + S-adenosyl-L-methionine = N(4)-methylcytidine(1402) in 16S rRNA + S-adenosyl-L-homocysteine + H(+). Functionally, specifically methylates the N4 position of cytidine in position 1402 (C1402) of 16S rRNA. The chain is Ribosomal RNA small subunit methyltransferase H from Mesomycoplasma hyopneumoniae (strain 7448) (Mycoplasma hyopneumoniae).